The chain runs to 1017 residues: MSQGPPPGESSEPEAKVLHTKRLYRAVVEAVHRLDLILCNKAAYQEVFKPENVSLRNKLRELCVKLMFLHPVDYGRKAEELLWRKVYYEVIQLIKTNKKHIHSRSTLECAYRTHLVAGIGFYQHLLLYIQSHYQLELQCCIDWTHVTDPLMGFKKPVSASGKEMDWAQMACHRCLVYLGDLSRYQNELAGVDTELLAERFYYQALSVAPQIGMPFNQLGTLAGSKYYNVEAMYCYLRCIQSEVSFEGAYGNLKRLYDKAAKMYHQLKKSETRKLSPSKKRCKDIKRLLVNFMYLQSLLQPKSSSVDSELTSLCQSVLEDFNLCLFYLPSSPNLGLTNEDEEECESGYAFLPDLLIFQMAIICLMGVHSLKRAGSKHYSAAIAFTLALFSHLINHVNIRLQAELEEGENPVSAFQSDGTDEPESKEALEKEEPEPEPPTVVPQADEGRKSRKHSRLSCLRRRRRHHPPKAGDDSDLSEGFESDSSHDSAQASDGSDSGSDKSLEGRGTAFDAETDSEMNSQESRSDLEDMEDEEGTRSPAQEPPQARSEVPDSLNGPLGPSEASIASNLQAMSTQMFQTKRCFRLAPTFSNLLLQPTTEPNSVASHRPCVNGDMDKPLEPASEDGSESEGSESSNRSCRNERSLQEKLQALMAEGLLPAVKVFLDWLRTNPDLIIVCAQSSQSLWNRLSVLLNLLPASAELQDSGLALCSEVQGLLEGCELPDLPASLLLPEDMALRNLPPLRAAHRRFNFDADRPLLSALEESVVRICCIRSFGHFVARLQGSILQFNPEVGIFVSIAQSEQESLLQQAQAQFRMAEEEARRNRLMRDMAQLRLQLEVSQLEGSLQQPKAQSAMSPYLIPDTQALCYHLPLIRQLATSGRFIIIIPRTVIDGLDLLKKEQPGARDGIRYLEAEFKKGNRYIRCQKEVGKSFERHKLKRQDADAWTLYKILDSCRQLTLAQGAGEEDPSGMVTIITGLHLDSPSALSGPMQAALQAAAHASVDVKNVLDFYRQWKEIG.

Serine 2 is subject to N-acetylserine. Phosphoserine occurs at positions 2 and 423. Disordered stretches follow at residues 406–562 (GENP…PSEA) and 597–640 (TEPN…CRNE). The segment covering 448–467 (KSRKHSRLSCLRRRRRHHPP) has biased composition (basic residues). Residues 486-496 (DSAQASDGSDS) are compositionally biased toward low complexity. The segment covering 620–629 (ASEDGSESEG) has biased composition (acidic residues). A coiled-coil region spans residues 798–842 (AQSEQESLLQQAQAQFRMAEEEARRNRLMRDMAQLRLQLEVSQLE). Residues 873 to 996 (RQLATSGRFI…GPMQAALQAA (124 aa)) form the PINc domain.

In terms of assembly, interacts with TERT, PPP2CA and SMG1. Part of a complex that contains SMG1, SMG5, SMG7, PPP2CA, a short isoform of UPF3A (isoform UPF3AS, but not isoform UPF3AL) and phosphorylated UPF1. Not detected in complexes that contain unphosphorylated UPF1.

Its subcellular location is the cytoplasm. The protein localises to the nucleus. Functionally, plays a role in nonsense-mediated mRNA decay. Does not have RNase activity by itself. Promotes dephosphorylation of UPF1. Together with SMG7 is thought to provide a link to the mRNA degradation machinery involving exonucleolytic pathways, and to serve as an adapter for UPF1 to protein phosphatase 2A (PP2A), thereby triggering UPF1 dephosphorylation. Necessary for TERT activity. The protein is Nonsense-mediated mRNA decay factor SMG5 of Mus musculus (Mouse).